Consider the following 403-residue polypeptide: Metacaspase-1 (403 aa).

A disordered region spans residues 1 to 95 (MFPGSGHNTY…PSGSQSFGQN (95 aa)). Over residues 13-22 (YPPPQGPPPN) the composition is skewed to pro residues. 2 stretches are compositionally biased toward low complexity: residues 23 to 34 (NNGYNSGPNNSY) and 49 to 62 (QYDQ…QSQP). Residues His-193 and Cys-249 contribute to the active site.

It belongs to the peptidase C14B family.

In terms of biological role, involved in cell death (apoptosis). The protein is Metacaspase-1 (MCA1) of Scheffersomyces stipitis (strain ATCC 58785 / CBS 6054 / NBRC 10063 / NRRL Y-11545) (Yeast).